Reading from the N-terminus, the 481-residue chain is Aspartyl/glutamyl-tRNA(Asn/Gln) amidotransferase subunit B (481 aa).

This sequence belongs to the GatB/GatE family. GatB subfamily. As to quaternary structure, heterotrimer of A, B and C subunits.

It carries out the reaction L-glutamyl-tRNA(Gln) + L-glutamine + ATP + H2O = L-glutaminyl-tRNA(Gln) + L-glutamate + ADP + phosphate + H(+). The enzyme catalyses L-aspartyl-tRNA(Asn) + L-glutamine + ATP + H2O = L-asparaginyl-tRNA(Asn) + L-glutamate + ADP + phosphate + 2 H(+). Functionally, allows the formation of correctly charged Asn-tRNA(Asn) or Gln-tRNA(Gln) through the transamidation of misacylated Asp-tRNA(Asn) or Glu-tRNA(Gln) in organisms which lack either or both of asparaginyl-tRNA or glutaminyl-tRNA synthetases. The reaction takes place in the presence of glutamine and ATP through an activated phospho-Asp-tRNA(Asn) or phospho-Glu-tRNA(Gln). This chain is Aspartyl/glutamyl-tRNA(Asn/Gln) amidotransferase subunit B, found in Pseudomonas aeruginosa (strain LESB58).